The chain runs to 124 residues: Small ribosomal subunit protein bS16 (124 aa).

The disordered stretch occupies residues 80-124; it reads AGLAKRPARNNPTKAQPGKKAQERAAEAKQKAEEAAAAASEAAAE. A compositionally biased stretch (basic and acidic residues) spans 99–113; sequence KAQERAAEAKQKAEE. Positions 114–124 are enriched in low complexity; that stretch reads AAAAASEAAAE.

The protein belongs to the bacterial ribosomal protein bS16 family.

This Rhizobium meliloti (strain 1021) (Ensifer meliloti) protein is Small ribosomal subunit protein bS16.